Consider the following 501-residue polypeptide: Acetyl-coenzyme A carboxylase carboxyl transferase subunit beta, chloroplastic (501 aa).

Residues 231 to 501 form the CoA carboxyltransferase N-terminal domain; that stretch reads LWIECENCYG…LIQNEKESRS (271 aa). Positions 235, 238, 254, and 257 each coordinate Zn(2+). A C4-type zinc finger spans residues 235–257; the sequence is CENCYGLNYKKILKSKMNICEHC.

Belongs to the AccD/PCCB family. In terms of assembly, acetyl-CoA carboxylase is a heterohexamer composed of biotin carboxyl carrier protein, biotin carboxylase and 2 subunits each of ACCase subunit alpha and ACCase plastid-coded subunit beta (accD). Zn(2+) serves as cofactor.

Its subcellular location is the plastid. The protein localises to the chloroplast stroma. The enzyme catalyses N(6)-carboxybiotinyl-L-lysyl-[protein] + acetyl-CoA = N(6)-biotinyl-L-lysyl-[protein] + malonyl-CoA. It participates in lipid metabolism; malonyl-CoA biosynthesis; malonyl-CoA from acetyl-CoA: step 1/1. Functionally, component of the acetyl coenzyme A carboxylase (ACC) complex. Biotin carboxylase (BC) catalyzes the carboxylation of biotin on its carrier protein (BCCP) and then the CO(2) group is transferred by the transcarboxylase to acetyl-CoA to form malonyl-CoA. This is Acetyl-coenzyme A carboxylase carboxyl transferase subunit beta, chloroplastic from Lotus japonicus (Lotus corniculatus var. japonicus).